We begin with the raw amino-acid sequence, 400 residues long: Formate-dependent phosphoribosylglycinamide formyltransferase (400 aa).

N(1)-(5-phospho-beta-D-ribosyl)glycinamide-binding positions include E21–L22 and E81. ATP contacts are provided by residues R114, K155, S160–Q165, E195–I198, and E203. One can recognise an ATP-grasp domain in the interval R119–L313. Mg(2+) is bound by residues E272 and E284. Residues D291, K360, and R367–R368 each bind N(1)-(5-phospho-beta-D-ribosyl)glycinamide.

It belongs to the PurK/PurT family. Homodimer.

The catalysed reaction is N(1)-(5-phospho-beta-D-ribosyl)glycinamide + formate + ATP = N(2)-formyl-N(1)-(5-phospho-beta-D-ribosyl)glycinamide + ADP + phosphate + H(+). The protein operates within purine metabolism; IMP biosynthesis via de novo pathway; N(2)-formyl-N(1)-(5-phospho-D-ribosyl)glycinamide from N(1)-(5-phospho-D-ribosyl)glycinamide (formate route): step 1/1. Its function is as follows. Involved in the de novo purine biosynthesis. Catalyzes the transfer of formate to 5-phospho-ribosyl-glycinamide (GAR), producing 5-phospho-ribosyl-N-formylglycinamide (FGAR). Formate is provided by PurU via hydrolysis of 10-formyl-tetrahydrofolate. This chain is Formate-dependent phosphoribosylglycinamide formyltransferase, found in Methylococcus capsulatus (strain ATCC 33009 / NCIMB 11132 / Bath).